The primary structure comprises 373 residues: P2Y purinoceptor 1 (373 aa).

The Extracellular portion of the chain corresponds to 1–51 (MTEVPWSAVPNGTDAAFLAGLGSLWGNSTIASTAAVSSSFRCALIKTGFQF). Asn11 and Asn27 each carry an N-linked (GlcNAc...) asparagine glycan. Cystine bridges form between Cys42-Cys296 and Cys124-Cys202. Lys46 serves as a coordination point for ADP. Residues 52–74 (YYLPAVYILVFIIGFLGNSVAIW) form a helical membrane-spanning segment. At 75–87 (MFVFHMKPWSGIS) the chain is on the cytoplasmic side. Residues 88-109 (VYMFNLALADFLYVLTLPALIF) traverse the membrane as a helical segment. The Extracellular portion of the chain corresponds to 110-125 (YYFNKTDWIFGDVMCK). Asn113 is a glycosylation site (N-linked (GlcNAc...) asparagine). Residues 126–147 (LQRFIFHVNLYGSILFLTCISA) traverse the membrane as a helical segment. Residues 148 to 166 (HRYSGVVYPLKSLGRLKKK) lie on the Cytoplasmic side of the membrane. A helical membrane pass occupies residues 167 to 188 (NAIYVSVLVWLIVVVAISPILF). Residues 189 to 214 (YSGTGIRKNKTVTCYDSTSDEYLRSY) lie on the Extracellular side of the membrane. A glycan (N-linked (GlcNAc...) asparagine) is linked at Asn197. ADP is bound at residue 203–205 (YDS). A helical transmembrane segment spans residues 215–237 (FIYSMCTTVAMFCIPLVLILGCY). The Cytoplasmic segment spans residues 238 to 260 (GLIVRALIYKDLDNSPLRRKSIY). A helical transmembrane segment spans residues 261–284 (LVIIVLTVFAVSYIPFHVMKTMNL). ADP contacts are provided by residues 283-287 (NLRAR), 303-306 (YATY), and Arg310. The Extracellular segment spans residues 285-303 (RARLDFQTPEMCDFNDRVY). The chain crosses the membrane as a helical span at residues 304–325 (ATYQVTRGLASLNSCVDPILYF). Residues 326 to 373 (LAGDTFRRRLSRATRKASRRSEANLQSKSEEMTLNILSEFKQNGDTSL) lie on the Cytoplasmic side of the membrane.

It belongs to the G-protein coupled receptor 1 family. As to expression, expressed in muscle, heart, liver, kidney, lung, brain, spleen, but not in testis.

It localises to the cell membrane. In terms of biological role, receptor for extracellular adenine nucleotides such as ADP. In platelets, binding to ADP leads to mobilization of intracellular calcium ions via activation of phospholipase C, a change in platelet shape, and ultimately platelet aggregation. The chain is P2Y purinoceptor 1 (P2ry1) from Rattus norvegicus (Rat).